A 23-amino-acid polypeptide reads, in one-letter code: Protein DCL, chloroplastic (23 aa).

The protein localises to the plastid. Its subcellular location is the chloroplast. In terms of biological role, has a function in the early stage of chloroplast development and palisade cell morphogenesis. In Pseudotsuga menziesii (Douglas-fir), this protein is Protein DCL, chloroplastic.